Here is a 913-residue protein sequence, read N- to C-terminus: DNA mismatch repair protein MutS (913 aa).

Residues 18–50 are disordered; that stretch reads NNKQKEKTKIPEDLSLEDLKKESQKRPRQRKNS. Residues 19–42 show a composition bias toward basic and acidic residues; the sequence is NKQKEKTKIPEDLSLEDLKKESQK. 720 to 727 contacts ATP; the sequence is GPNASGKS.

This sequence belongs to the DNA mismatch repair MutS family.

Its function is as follows. This protein is involved in the repair of mismatches in DNA. It is possible that it carries out the mismatch recognition step. This protein has a weak ATPase activity. The sequence is that of DNA mismatch repair protein MutS from Prochlorococcus marinus (strain MIT 9301).